The following is a 164-amino-acid chain: Phosphopantetheine adenylyltransferase (164 aa).

S10 contacts substrate. Residues 10–11 (SF) and H18 each bind ATP. K42, T79, and R93 together coordinate substrate. ATP contacts are provided by residues 94 to 96 (GLR), E104, and 129 to 135 (VRPIAAT).

It belongs to the bacterial CoaD family. Homohexamer. Mg(2+) is required as a cofactor.

The protein resides in the cytoplasm. The catalysed reaction is (R)-4'-phosphopantetheine + ATP + H(+) = 3'-dephospho-CoA + diphosphate. The protein operates within cofactor biosynthesis; coenzyme A biosynthesis; CoA from (R)-pantothenate: step 4/5. In terms of biological role, reversibly transfers an adenylyl group from ATP to 4'-phosphopantetheine, yielding dephospho-CoA (dPCoA) and pyrophosphate. The protein is Phosphopantetheine adenylyltransferase of Bradyrhizobium sp. (strain BTAi1 / ATCC BAA-1182).